Reading from the N-terminus, the 1765-residue chain is RANBP2-like and GRIP domain-containing protein 5/6 (1765 aa).

Residue Thr19 is modified to Phosphothreonine. Position 21 is a phosphoserine (Ser21). 3 TPR repeats span residues 26–59 (SMKG…QERD), 60–93 (PKAH…NPTQ), and 648–681 (EDAH…VSYW). 2 disordered regions span residues 760–804 (GPLY…PRWT) and 924–945 (FGIS…NDTG). Low complexity predominate over residues 778 to 797 (STPSPTKYSLSPSKSYKYSP). A compositionally biased stretch (basic and acidic residues) spans 931-941 (NQEKKREKPLE). A RanBD1 1 domain is found at 1036 to 1172 (HFEPVVQMPE…FEECQRLLLD (137 aa)). Disordered regions lie at residues 1214-1247 (KVTE…PTLE) and 1306-1330 (AKLN…EERD). Positions 1235 to 1244 (IKPNAENTGP) are enriched in polar residues. Over residues 1317–1329 (TDEESVVTQEEER) the composition is skewed to acidic residues. One can recognise a RanBD1 2 domain in the interval 1333–1469 (YFEPVVPLPD…FDEAKTAQEK (137 aa)). The span at 1580–1593 (NNSETSSVAQSGSE) shows a compositional bias: polar residues. The interval 1580 to 1621 (NNSETSSVAQSGSESKVEPKKCELSKNSDIEQSSDSKVKNLS) is disordered. Residues 1594 to 1617 (SKVEPKKCELSKNSDIEQSSDSKV) show a composition bias toward basic and acidic residues. Residues 1702-1752 (REKSAANLEYLKNVLLQFIFLKPGSERERLLPVINTMLQLSPEEKGKLAAV) enclose the GRIP domain.

As to expression, expressed in testis.

It localises to the cytoplasm. In Homo sapiens (Human), this protein is RANBP2-like and GRIP domain-containing protein 5/6 (RGPD5).